A 213-amino-acid polypeptide reads, in one-letter code: High frequency lysogenization protein HflD homolog (213 aa).

Positions 79–126 (QGLNAELTRYTLSLMVLERKLSSAKGALDTLGNRINGLQRQLEHFDLQ) form a coiled coil.

This sequence belongs to the HflD family.

It is found in the cytoplasm. It localises to the cell inner membrane. This is High frequency lysogenization protein HflD homolog from Shigella dysenteriae serotype 1 (strain Sd197).